The primary structure comprises 187 residues: Structural protein ORF187 (187 aa).

A helical transmembrane segment spans residues 65-85 (IYQPTAIAVSGVGGIIGALLA).

The protein resides in the host membrane. Its subcellular location is the virion. The sequence is that of Structural protein ORF187 from Acidianus two-tailed virus (ATV).